A 275-amino-acid polypeptide reads, in one-letter code: Large ribosomal subunit protein uL2 (275 aa).

2 disordered regions span residues 35-55 (EKQT…RHKG) and 223-260 (VAMN…KTRN). Polar residues predominate over residues 39–49 (RSSGRNNQGRV).

Belongs to the universal ribosomal protein uL2 family. In terms of assembly, part of the 50S ribosomal subunit. Forms a bridge to the 30S subunit in the 70S ribosome.

Its function is as follows. One of the primary rRNA binding proteins. Required for association of the 30S and 50S subunits to form the 70S ribosome, for tRNA binding and peptide bond formation. It has been suggested to have peptidyltransferase activity; this is somewhat controversial. Makes several contacts with the 16S rRNA in the 70S ribosome. This chain is Large ribosomal subunit protein uL2, found in Methylococcus capsulatus (strain ATCC 33009 / NCIMB 11132 / Bath).